A 675-amino-acid chain; its full sequence is tRNA 5-methylaminomethyl-2-thiouridine biosynthesis bifunctional protein MnmC (675 aa).

Residues 1–245 (MANLPIQHAS…KREMLSGLLP (245 aa)) are tRNA (mnm(5)s(2)U34)-methyltransferase. Residues 271–675 (IGGGIASVLT…LLKGKPVTHD (405 aa)) are FAD-dependent cmnm(5)s(2)U34 oxidoreductase.

It in the N-terminal section; belongs to the methyltransferase superfamily. tRNA (mnm(5)s(2)U34)-methyltransferase family. The protein in the C-terminal section; belongs to the DAO family. FAD serves as cofactor.

The protein resides in the cytoplasm. The catalysed reaction is 5-aminomethyl-2-thiouridine(34) in tRNA + S-adenosyl-L-methionine = 5-methylaminomethyl-2-thiouridine(34) in tRNA + S-adenosyl-L-homocysteine + H(+). In terms of biological role, catalyzes the last two steps in the biosynthesis of 5-methylaminomethyl-2-thiouridine (mnm(5)s(2)U) at the wobble position (U34) in tRNA. Catalyzes the FAD-dependent demodification of cmnm(5)s(2)U34 to nm(5)s(2)U34, followed by the transfer of a methyl group from S-adenosyl-L-methionine to nm(5)s(2)U34, to form mnm(5)s(2)U34. The sequence is that of tRNA 5-methylaminomethyl-2-thiouridine biosynthesis bifunctional protein MnmC from Pectobacterium atrosepticum (strain SCRI 1043 / ATCC BAA-672) (Erwinia carotovora subsp. atroseptica).